The chain runs to 1010 residues: Antigenic heat-stable 120 kDa protein (1010 aa).

2 disordered regions span residues 1-34 and 347-396; these read DTSE…QTTT and GQSK…QSQQ. Positions 12 to 27 are enriched in basic and acidic residues; sequence EYTEEQKQTLEQEQKE. Composition is skewed to polar residues over residues 347 to 372 and 379 to 396; these read GQSK…QHKQ and PTNQ…QSQQ.

Its subcellular location is the cytoplasm. This is Antigenic heat-stable 120 kDa protein (sca4) from Rickettsia parkeri.